The following is a 545-amino-acid chain: Eukaryotic translation initiation factor 3 subunit D-2 (545 aa).

Positions 99 to 113 are enriched in basic residues; it reads FRGNIRNNPRTRGRT. The segment at 99–158 is disordered; sequence FRGNIRNNPRTRGRTGRGGAVTGIGGNQPGVGVNERTKYGKGRDNRRQMGRRFGRNAPTR. Residues 114 to 127 are compositionally biased toward gly residues; it reads GRGGAVTGIGGNQP. Residues 133-145 are compositionally biased toward basic and acidic residues; sequence ERTKYGKGRDNRR. Residues 287–301 are RNA gate; that stretch reads QFDLLTVNETALEPP.

This sequence belongs to the eIF-3 subunit D family. Component of the eukaryotic translation initiation factor 3 (eIF-3) complex. The eIF-3 complex interacts with pix.

The protein resides in the cytoplasm. Its function is as follows. mRNA cap-binding component of the eukaryotic translation initiation factor 3 (eIF-3) complex, which is involved in protein synthesis of a specialized repertoire of mRNAs and, together with other initiation factors, stimulates binding of mRNA and methionyl-tRNAi to the 40S ribosome. The eIF-3 complex specifically targets and initiates translation of a subset of mRNAs involved in cell proliferation. In the eIF-3 complex, eif3d specifically recognizes and binds the 7-methylguanosine cap of a subset of mRNAs. In Drosophila persimilis (Fruit fly), this protein is Eukaryotic translation initiation factor 3 subunit D-2.